The sequence spans 227 residues: Cytochrome c oxidase subunit 2 (227 aa).

Residues 1–14 (MAHAVQYGFQDAAA) are Mitochondrial intermembrane-facing. Residues 15-45 (PIMEELLYFHDHTLMIVFMISSLVLYIISLM) form a helical membrane-spanning segment. Residues 46–59 (LSTELTHTSTMDAQ) lie on the Mitochondrial matrix side of the membrane. The chain crosses the membrane as a helical span at residues 60–87 (EVETVWTILPAVILILIALPSLRILYMM). Residues 88–227 (DEIETPSLTL…YFEEWLLKTL (140 aa)) are Mitochondrial intermembrane-facing. The Cu cation site is built by His-161, Cys-196, Glu-198, Cys-200, His-204, and Met-207. A Mg(2+)-binding site is contributed by Glu-198. Tyr-218 bears the Phosphotyrosine mark.

This sequence belongs to the cytochrome c oxidase subunit 2 family. In terms of assembly, component of the cytochrome c oxidase (complex IV, CIV), a multisubunit enzyme composed of 14 subunits. The complex is composed of a catalytic core of 3 subunits MT-CO1, MT-CO2 and MT-CO3, encoded in the mitochondrial DNA, and 11 supernumerary subunits COX4I, COX5A, COX5B, COX6A, COX6B, COX6C, COX7A, COX7B, COX7C, COX8 and NDUFA4, which are encoded in the nuclear genome. The complex exists as a monomer or a dimer and forms supercomplexes (SCs) in the inner mitochondrial membrane with NADH-ubiquinone oxidoreductase (complex I, CI) and ubiquinol-cytochrome c oxidoreductase (cytochrome b-c1 complex, complex III, CIII), resulting in different assemblies (supercomplex SCI(1)III(2)IV(1) and megacomplex MCI(2)III(2)IV(2)). Found in a complex with TMEM177, COA6, COX18, COX20, SCO1 and SCO2. Interacts with TMEM177 in a COX20-dependent manner. Interacts with COX20. Interacts with COX16. Requires Cu cation as cofactor.

The protein localises to the mitochondrion inner membrane. It carries out the reaction 4 Fe(II)-[cytochrome c] + O2 + 8 H(+)(in) = 4 Fe(III)-[cytochrome c] + 2 H2O + 4 H(+)(out). Its function is as follows. Component of the cytochrome c oxidase, the last enzyme in the mitochondrial electron transport chain which drives oxidative phosphorylation. The respiratory chain contains 3 multisubunit complexes succinate dehydrogenase (complex II, CII), ubiquinol-cytochrome c oxidoreductase (cytochrome b-c1 complex, complex III, CIII) and cytochrome c oxidase (complex IV, CIV), that cooperate to transfer electrons derived from NADH and succinate to molecular oxygen, creating an electrochemical gradient over the inner membrane that drives transmembrane transport and the ATP synthase. Cytochrome c oxidase is the component of the respiratory chain that catalyzes the reduction of oxygen to water. Electrons originating from reduced cytochrome c in the intermembrane space (IMS) are transferred via the dinuclear copper A center (CU(A)) of subunit 2 and heme A of subunit 1 to the active site in subunit 1, a binuclear center (BNC) formed by heme A3 and copper B (CU(B)). The BNC reduces molecular oxygen to 2 water molecules using 4 electrons from cytochrome c in the IMS and 4 protons from the mitochondrial matrix. The protein is Cytochrome c oxidase subunit 2 (MT-CO2) of Galago senegalensis (Northern lesser bushbaby).